The chain runs to 211 residues: Probable nicotinate-nucleotide adenylyltransferase (211 aa).

Belongs to the NadD family.

It catalyses the reaction nicotinate beta-D-ribonucleotide + ATP + H(+) = deamido-NAD(+) + diphosphate. Its pathway is cofactor biosynthesis; NAD(+) biosynthesis; deamido-NAD(+) from nicotinate D-ribonucleotide: step 1/1. Its function is as follows. Catalyzes the reversible adenylation of nicotinate mononucleotide (NaMN) to nicotinic acid adenine dinucleotide (NaAD). This chain is Probable nicotinate-nucleotide adenylyltransferase, found in Shewanella frigidimarina (strain NCIMB 400).